The chain runs to 138 residues: Basic phospholipase A2 homolog promutoxin (138 aa).

The N-terminal stretch at 1–16 (MRTLWIMAVLLLGVEG) is a signal peptide. Cystine bridges form between Cys42–Cys132, Cys44–Cys60, Cys59–Cys112, Cys65–Cys138, Cys66–Cys105, Cys73–Cys98, and Cys91–Cys103. Residues 122-133 (KKHRVTMKFLCK) form an important for membrane-damaging activities in eukaryotes and bacteria; heparin-binding region.

This sequence belongs to the phospholipase A2 family. Group II subfamily. R49 sub-subfamily. Homodimer; non-covalently linked. As to expression, expressed by the venom gland.

It localises to the secreted. In terms of biological role, snake venom phospholipase A2 homolog that lacks enzymatic activity. Exhibits potent myotoxicity causing myonecrosis and edema in the gastrocnemius muscle of mice. Is also able to stimulate the release of IL12 (IL12A-IL12B), TNF-alpha (TNF), IL6 and IL1-beta (IL1B) from human monocytes, and induce IL2, TNFalpha and IL6 release from T-cells. A model of myotoxic mechanism has been proposed: an apo Lys49-PLA2 is activated by the entrance of a hydrophobic molecule (e.g. fatty acid) at the hydrophobic channel of the protein leading to a reorientation of a monomer. This reorientation causes a transition between 'inactive' to 'active' states, causing alignment of C-terminal and membrane-docking sites (MDoS) side-by-side and putting the membrane-disruption sites (MDiS) in the same plane, exposed to solvent and in a symmetric position for both monomers. The MDoS region stabilizes the toxin on membrane by the interaction of charged residues with phospholipid head groups. Subsequently, the MDiS region destabilizes the membrane with penetration of hydrophobic residues. This insertion causes a disorganization of the membrane, allowing an uncontrolled influx of ions (i.e. calcium and sodium), and eventually triggering irreversible intracellular alterations and cell death. This is Basic phospholipase A2 homolog promutoxin from Protobothrops mucrosquamatus (Taiwan habu).